The chain runs to 291 residues: Sulfotransferase 1A1 (291 aa).

44–49 (KSGTTW) provides a ligand contact to 3'-phosphoadenylyl sulfate. A substrate-binding site is contributed by 102 to 104 (KTH). Catalysis depends on His104, which acts as the Proton acceptor. 3'-phosphoadenylyl sulfate contacts are provided by residues Arg126, Ser134, Tyr189, 223–228 (TSFKKM), and 251–255 (FMRKG). A Phosphoserine modification is found at Ser134.

This sequence belongs to the sulfotransferase 1 family. Homodimer. The N-terminus is blocked. In terms of tissue distribution, liver, kidney, heart and colon.

It localises to the cytoplasm. It catalyses the reaction a phenol + 3'-phosphoadenylyl sulfate = an aryl sulfate + adenosine 3',5'-bisphosphate + H(+). The enzyme catalyses 17beta-estradiol + 3'-phosphoadenylyl sulfate = 17beta-estradiol 3-sulfate + adenosine 3',5'-bisphosphate + H(+). It carries out the reaction 4-ethylphenol + 3'-phosphoadenylyl sulfate = 4-ethylphenyl sulfate + adenosine 3',5'-bisphosphate + H(+). The catalysed reaction is 4-nitrophenol + 3'-phosphoadenylyl sulfate = 4-nitrophenyl sulfate + adenosine 3',5'-bisphosphate. It catalyses the reaction dopamine + 3'-phosphoadenylyl sulfate = dopamine 3-O-sulfate + adenosine 3',5'-bisphosphate + H(+). The enzyme catalyses dopamine + 3'-phosphoadenylyl sulfate = dopamine 4-O-sulfate + adenosine 3',5'-bisphosphate + H(+). It carries out the reaction 3,3',5-triiodo-L-thyronine + 3'-phosphoadenylyl sulfate = 3,3',5-triiodo-L-thyronine sulfate + adenosine 3',5'-bisphosphate + H(+). The catalysed reaction is 3,3',5'-triiodo-L-thyronine + 3'-phosphoadenylyl sulfate = 3,3',5'-triiodo-L-thyronine sulfate + adenosine 3',5'-bisphosphate + H(+). It catalyses the reaction 3,3'-diiodo-L-thyronine + 3'-phosphoadenylyl sulfate = 3,3'-diiodo-L-thyronine sulfate + adenosine 3',5'-bisphosphate + H(+). The enzyme catalyses L-thyroxine + 3'-phosphoadenylyl sulfate = L-thyroxine sulfate + adenosine 3',5'-bisphosphate + H(+). In terms of biological role, sulfotransferase that utilizes 3'-phospho-5'-adenylyl sulfate (PAPS) as sulfonate donor to catalyze the sulfate conjugation of a wide variety of acceptor molecules bearing a hydroxyl or an amine group. Sulfonation increases the water solubility of most compounds, and therefore their renal excretion, but it can also result in bioactivation to form active metabolites. Displays broad substrate specificity for small phenolic compounds. Plays an important roles in the sulfonation of endogenous molecules such as steroid hormones. Mediates the sulfate conjugation of a variety of xenobiotics, including the drugs acetaminophen and minoxidil. Mediates also the metabolic activation of carcinogenic N-hydroxyarylamines leading to highly reactive intermediates capable of forming DNA adducts, potentially resulting in mutagenesis. May play a role in gut microbiota-host metabolic interaction. O-sulfonates 4-ethylphenol (4-EP), a dietary tyrosine-derived metabolite produced by gut bacteria. The product 4-EPS crosses the blood-brain barrier and may negatively regulate oligodendrocyte maturation and myelination, affecting the functional connectivity of different brain regions associated with the limbic system. Catalyzes the sulfate conjugation of dopamine. Catalyzes the sulfation of T4 (L-thyroxine/3,5,3',5'-tetraiodothyronine), T3 (3,5,3'-triiodothyronine), rT3 (3,3',5'-triiodothyronine) and 3,3'-T2 (3,3'-diiodothyronine), with a substrate preference of 3,3'-T2 &gt; rT3 &gt; T3 &gt; T4. The protein is Sulfotransferase 1A1 (Sult1a1) of Rattus norvegicus (Rat).